The sequence spans 323 residues: tRNA dimethylallyltransferase (323 aa).

Glycine 12 to threonine 19 is a binding site for ATP. Threonine 14–threonine 19 provides a ligand contact to substrate. Interaction with substrate tRNA regions lie at residues aspartate 37–leucine 40 and glutamine 161–arginine 165.

It belongs to the IPP transferase family. As to quaternary structure, monomer. It depends on Mg(2+) as a cofactor.

It carries out the reaction adenosine(37) in tRNA + dimethylallyl diphosphate = N(6)-dimethylallyladenosine(37) in tRNA + diphosphate. Its function is as follows. Catalyzes the transfer of a dimethylallyl group onto the adenine at position 37 in tRNAs that read codons beginning with uridine, leading to the formation of N6-(dimethylallyl)adenosine (i(6)A). This chain is tRNA dimethylallyltransferase, found in Pseudomonas fluorescens (strain Pf0-1).